Reading from the N-terminus, the 376-residue chain is Cysteine proteinase 2 (376 aa).

Residues 1–18 (MRLLVFLILLIFVNFSFA) form the signal peptide. Residues 19-122 (NVRPNGRRFS…EVLNVEDLQT (104 aa)) constitute a propeptide, activation peptide. Cystine bridges form between Cys-144-Cys-187, Cys-178-Cys-221, and Cys-279-Cys-365. Cys-147 is an active-site residue. Catalysis depends on residues His-286 and Asn-343.

It belongs to the peptidase C1 family.

Its subcellular location is the lysosome. In terms of biological role, cysteine proteinases 1 and 2 are believed to participate in the breakdown of protein during differentiation of Dictyostelium as a response to starvation. This is Cysteine proteinase 2 (cprB) from Dictyostelium discoideum (Social amoeba).